A 100-amino-acid chain; its full sequence is Urease subunit gamma (100 aa).

The protein belongs to the urease gamma subunit family. As to quaternary structure, heterotrimer of UreA (gamma), UreB (beta) and UreC (alpha) subunits. Three heterotrimers associate to form the active enzyme.

The protein resides in the cytoplasm. The enzyme catalyses urea + 2 H2O + H(+) = hydrogencarbonate + 2 NH4(+). It participates in nitrogen metabolism; urea degradation; CO(2) and NH(3) from urea (urease route): step 1/1. The sequence is that of Urease subunit gamma from Yersinia rohdei.